The chain runs to 467 residues: Bifunctional protein GlmU (467 aa).

The pyrophosphorylase stretch occupies residues 1-229 (MEKNTIILAA…FSESMGVNDR (229 aa)). Residues 8 to 11 (LAAG), K22, Q72, 77 to 78 (GT), 100 to 102 (SGD), G139, E154, N169, and N227 contribute to the UDP-N-acetyl-alpha-D-glucosamine site. A Mg(2+)-binding site is contributed by D102. N227 lines the Mg(2+) pocket. Positions 230–250 (LALSKATKVMQRRINEEHMVN) are linker. The interval 251-467 (GVTIIDPENT…ALKAEEENNK (217 aa)) is N-acetyltransferase. UDP-N-acetyl-alpha-D-glucosamine contacts are provided by R332 and K350. The Proton acceptor role is filled by H362. Residues Y365 and N376 each coordinate UDP-N-acetyl-alpha-D-glucosamine. Acetyl-CoA-binding positions include 385–386 (NY), S404, A422, and R439.

In the N-terminal section; belongs to the N-acetylglucosamine-1-phosphate uridyltransferase family. This sequence in the C-terminal section; belongs to the transferase hexapeptide repeat family. As to quaternary structure, homotrimer. Mg(2+) serves as cofactor.

The protein localises to the cytoplasm. It carries out the reaction alpha-D-glucosamine 1-phosphate + acetyl-CoA = N-acetyl-alpha-D-glucosamine 1-phosphate + CoA + H(+). The catalysed reaction is N-acetyl-alpha-D-glucosamine 1-phosphate + UTP + H(+) = UDP-N-acetyl-alpha-D-glucosamine + diphosphate. It functions in the pathway nucleotide-sugar biosynthesis; UDP-N-acetyl-alpha-D-glucosamine biosynthesis; N-acetyl-alpha-D-glucosamine 1-phosphate from alpha-D-glucosamine 6-phosphate (route II): step 2/2. The protein operates within nucleotide-sugar biosynthesis; UDP-N-acetyl-alpha-D-glucosamine biosynthesis; UDP-N-acetyl-alpha-D-glucosamine from N-acetyl-alpha-D-glucosamine 1-phosphate: step 1/1. It participates in bacterial outer membrane biogenesis; LPS lipid A biosynthesis. Its function is as follows. Catalyzes the last two sequential reactions in the de novo biosynthetic pathway for UDP-N-acetylglucosamine (UDP-GlcNAc). The C-terminal domain catalyzes the transfer of acetyl group from acetyl coenzyme A to glucosamine-1-phosphate (GlcN-1-P) to produce N-acetylglucosamine-1-phosphate (GlcNAc-1-P), which is converted into UDP-GlcNAc by the transfer of uridine 5-monophosphate (from uridine 5-triphosphate), a reaction catalyzed by the N-terminal domain. The protein is Bifunctional protein GlmU of Pediococcus pentosaceus (strain ATCC 25745 / CCUG 21536 / LMG 10740 / 183-1w).